Reading from the N-terminus, the 179-residue chain is Bifunctional protein PyrR (179 aa).

A PRPP-binding motif is present at residues 99-111; the sequence is VILIDDVLYTGRT.

Belongs to the purine/pyrimidine phosphoribosyltransferase family. PyrR subfamily. As to quaternary structure, homodimer and homohexamer; in equilibrium.

It carries out the reaction UMP + diphosphate = 5-phospho-alpha-D-ribose 1-diphosphate + uracil. Functionally, regulates transcriptional attenuation of the pyrimidine nucleotide (pyr) operon by binding in a uridine-dependent manner to specific sites on pyr mRNA. This disrupts an antiterminator hairpin in the RNA and favors formation of a downstream transcription terminator, leading to a reduced expression of downstream genes. Its function is as follows. Also displays a weak uracil phosphoribosyltransferase activity which is not physiologically significant. The chain is Bifunctional protein PyrR from Latilactobacillus sakei subsp. sakei (strain 23K) (Lactobacillus sakei subsp. sakei).